The primary structure comprises 242 residues: Methylthioribulose-1-phosphate dehydratase (242 aa).

The span at 1–11 (MAQEIQKENND) shows a compositional bias: basic and acidic residues. A disordered region spans residues 1 to 20 (MAQEIQKENNDHLVQSSDPE). Cys-100 provides a ligand contact to substrate. Residues His-117 and His-119 each contribute to the Zn(2+) site. The Proton donor/acceptor role is filled by Glu-146. His-202 serves as a coordination point for Zn(2+).

This sequence belongs to the aldolase class II family. MtnB subfamily. It depends on Zn(2+) as a cofactor.

Its subcellular location is the cytoplasm. The catalysed reaction is 5-(methylsulfanyl)-D-ribulose 1-phosphate = 5-methylsulfanyl-2,3-dioxopentyl phosphate + H2O. Its pathway is amino-acid biosynthesis; L-methionine biosynthesis via salvage pathway; L-methionine from S-methyl-5-thio-alpha-D-ribose 1-phosphate: step 2/6. In terms of biological role, catalyzes the dehydration of methylthioribulose-1-phosphate (MTRu-1-P) into 2,3-diketo-5-methylthiopentyl-1-phosphate (DK-MTP-1-P). This chain is Methylthioribulose-1-phosphate dehydratase, found in Aspergillus niger (strain ATCC MYA-4892 / CBS 513.88 / FGSC A1513).